The following is a 92-amino-acid chain: MARSIKKGPFVDEHLMKKVEAQEGSEKKQVIKTWSRRSTIFPNFIGHTFAVYDGRKHVPVYVTEDMVGHKLGEFAPTRTFKGHVADDKKTRR.

This sequence belongs to the universal ribosomal protein uS19 family.

Protein S19 forms a complex with S13 that binds strongly to the 16S ribosomal RNA. This chain is Small ribosomal subunit protein uS19, found in Staphylococcus aureus (strain Mu3 / ATCC 700698).